The primary structure comprises 255 residues: Type III pantothenate kinase (255 aa).

Asp-6 to Lys-13 is a binding site for ATP. Gly-107–Arg-110 serves as a coordination point for substrate. The Proton acceptor role is filled by Asp-109. Thr-132 contributes to the ATP binding site. Residue Thr-184 participates in substrate binding.

The protein belongs to the type III pantothenate kinase family. In terms of assembly, homodimer. NH4(+) is required as a cofactor. Requires K(+) as cofactor.

The protein localises to the cytoplasm. It carries out the reaction (R)-pantothenate + ATP = (R)-4'-phosphopantothenate + ADP + H(+). It participates in cofactor biosynthesis; coenzyme A biosynthesis; CoA from (R)-pantothenate: step 1/5. In terms of biological role, catalyzes the phosphorylation of pantothenate (Pan), the first step in CoA biosynthesis. The protein is Type III pantothenate kinase of Roseiflexus castenholzii (strain DSM 13941 / HLO8).